Consider the following 1793-residue polypeptide: Brefeldin A-inhibited guanine nucleotide-exchange protein 2 (1793 aa).

Position 2 is an N-acetylalanine (Ala2). 3 disordered regions span residues 45-71, 266-299, and 579-606; these read NSLQ…PGPL, TMSG…LLDS, and GSPQ…GGTS. The segment covering 55–66 has biased composition (low complexity); the sequence is SSAATDSESESS. Residues 270 to 281 show a composition bias toward gly residues; sequence SGSGSGSGGQDG. 2 stretches are compositionally biased toward polar residues: residues 284–294 and 594–605; these read GTTTVETTNPT and GSDTYSESSGGT. A Phosphoserine modification is found at Ser595. Residues 610-797 form the SEC7 domain; sequence AIEQRRAYKL…RSLYERITKH (188 aa). Glu712 is an active-site residue. A compositionally biased stretch (polar residues) spans 1311-1327; it reads NKYKGTSGKIPQSSLHS. The segment at 1311 to 1333 is disordered; that stretch reads NKYKGTSGKIPQSSLHSGKSGKQ.

Homodimer.

The protein localises to the cytoplasm. The protein resides in the cytosol. Its subcellular location is the membrane. Its activity is regulated as follows. Inhibited by brefeldin A. Activates the ARF proteins by exchanging bound GDP for free GTP. Plays a role in vesicular protein sorting. The polypeptide is Brefeldin A-inhibited guanine nucleotide-exchange protein 2 (BIG2) (Arabidopsis thaliana (Mouse-ear cress)).